The following is a 258-amino-acid chain: RBPJ-interacting and tubulin-associated protein 1 (258 aa).

Disordered regions lie at residues 28–86 (FGSP…PRKK), 132–182 (TPPA…APRS), and 195–258 (AVPS…PPWK). Over residues 71-81 (SPSSRGSTPNL) the composition is skewed to polar residues. A Nuclear localization signal motif is present at residues 81 to 97 (LTPRKKNKYRLIGHTPS). The interaction with RBPJ/RBPSUH stretch occupies residues 117–145 (RTAVEDAAKLRTLFWTPPATPRGSHSPRP). Residues 145–258 (PRETPLRAIH…CPQKPKPPWK (114 aa)) are interaction with tubulin. 2 stretches are compositionally biased toward polar residues: residues 201-212 (HPASTAPQTNGP) and 236-245 (GSVSGPTTPQ).

The protein belongs to the RITA family. Interacts with RBPJ/RBPSUH.

Its subcellular location is the cytoplasm. The protein localises to the nucleus. The protein resides in the cytoskeleton. It localises to the microtubule organizing center. It is found in the centrosome. Tubulin-binding protein that acts as a negative regulator of Notch signaling pathway. Shuttles between the cytoplasm and the nucleus and mediates the nuclear export of RBPJ/RBPSUH, thereby preventing the interaction between RBPJ/RBPSUH and NICD product of Notch proteins (Notch intracellular domain), leading to down-regulate Notch-mediated transcription. May play a role in neurogenesis. The polypeptide is RBPJ-interacting and tubulin-associated protein 1 (Rita1) (Rattus norvegicus (Rat)).